The sequence spans 193 residues: ATP-dependent Clp protease proteolytic subunit (193 aa).

Catalysis depends on S98, which acts as the Nucleophile. H123 is an active-site residue.

Belongs to the peptidase S14 family. In terms of assembly, fourteen ClpP subunits assemble into 2 heptameric rings which stack back to back to give a disk-like structure with a central cavity, resembling the structure of eukaryotic proteasomes.

It localises to the cytoplasm. The catalysed reaction is Hydrolysis of proteins to small peptides in the presence of ATP and magnesium. alpha-casein is the usual test substrate. In the absence of ATP, only oligopeptides shorter than five residues are hydrolyzed (such as succinyl-Leu-Tyr-|-NHMec, and Leu-Tyr-Leu-|-Tyr-Trp, in which cleavage of the -Tyr-|-Leu- and -Tyr-|-Trp bonds also occurs).. Functionally, cleaves peptides in various proteins in a process that requires ATP hydrolysis. Has a chymotrypsin-like activity. Plays a major role in the degradation of misfolded proteins. This Glaesserella parasuis serovar 5 (strain SH0165) (Haemophilus parasuis) protein is ATP-dependent Clp protease proteolytic subunit.